We begin with the raw amino-acid sequence, 535 residues long: MEVNVKGNYVQVYVMLPLDAVSVNNRFEKGDELRAQLRKLVEAGVDGVMVDVWWGLVEGKGPKAYDWSAYKQLFELVQKAGLKLQAIMSFHQCGGNVGDAVNIPIPQWVRDVGTRDPDIFYTDGHGTRNIEYLTLGVDNQPLFHGRSAVQMYADYMTSFRENMKEFLDAGVIVDIEVGLGPAGEMRYPSYPQSHGWSFPGIGEFICYDKYLQADFKAAAAAVGHPEWEFPNDAGQYNDTPERTQFFRDNGTYLTEKGRFFLAWYSNNLIKHGDRILDEANKVFLGYKVQLAIKISGIHWWYKVPSHAAELTAGYYNLHDRDGYRTIARMLKRHRASINFTCAEMRDSEQSSQAMSAPEELVQQVLSAGWREGLNVACENALPRYDPTAYNTILRNARPHGINQSGPPEHKLFGFTYLRLSNQLVEGQNYVNFKTFVDRMHANLPRDPYVDPMAPLPRSGPEISIEMILQAAKPKLQPFPFQEHTDLPVGPTGGMGGQAEGPTCGMGGQVKGPTGGMGGQAEDPTSGMGGELPATM.

The propeptide at 1 to 2 (ME) is removed in mature form. At Val-3 the chain carries N-acetylvaline. Substrate is bound by residues Asp-51, His-91, and Asp-99. Catalysis depends on Glu-184, which acts as the Proton donor. Residues Lys-293, His-298, and Thr-340 each contribute to the substrate site. Glu-378 (proton acceptor) is an active-site residue. Substrate-binding positions include 379–380 (NA) and Arg-418. 3 tandem repeats follow at residues 489–499 (GPTGGMGGQAE), 500–510 (GPTCGMGGQVK), and 511–521 (GPTGGMGGQAE). The 4 X 11 AA tandem repeats stretch occupies residues 489-532 (GPTGGMGGQAEGPTCGMGGQVKGPTGGMGGQAEDPTSGMGGELP). A propeptide spans 490–535 (PTGGMGGQAEGPTCGMGGQVKGPTGGMGGQAEDPTSGMGGELPATM) (removed in mature form). Residues 513 to 535 (TGGMGGQAEDPTSGMGGELPATM) are disordered. The 4; approximate repeat unit spans residues 522 to 532 (DPTSGMGGELP).

It belongs to the glycosyl hydrolase 14 family. As to quaternary structure, monomer. In terms of tissue distribution, endosperm.

The enzyme catalyses Hydrolysis of (1-&gt;4)-alpha-D-glucosidic linkages in polysaccharides so as to remove successive maltose units from the non-reducing ends of the chains.. Functionally, catalyzes the liberation of maltose from 1,4-alpha-D glucans. The protein is Beta-amylase of Hordeum vulgare subsp. spontaneum (Wild barley).